A 251-amino-acid polypeptide reads, in one-letter code: Probable transcriptional regulatory protein DET0444 (251 aa).

It belongs to the TACO1 family.

Its subcellular location is the cytoplasm. The protein is Probable transcriptional regulatory protein DET0444 of Dehalococcoides mccartyi (strain ATCC BAA-2266 / KCTC 15142 / 195) (Dehalococcoides ethenogenes (strain 195)).